A 362-amino-acid polypeptide reads, in one-letter code: 3-dehydroquinate synthase (362 aa).

Residues 72–77 (SGEQAK), 106–110 (GVVGD), 130–131 (TT), Lys-142, and Lys-151 contribute to the NAD(+) site. Glu-184, His-246, and His-263 together coordinate Zn(2+).

Belongs to the sugar phosphate cyclases superfamily. Dehydroquinate synthase family. NAD(+) serves as cofactor. It depends on Co(2+) as a cofactor. Zn(2+) is required as a cofactor.

It localises to the cytoplasm. The enzyme catalyses 7-phospho-2-dehydro-3-deoxy-D-arabino-heptonate = 3-dehydroquinate + phosphate. It participates in metabolic intermediate biosynthesis; chorismate biosynthesis; chorismate from D-erythrose 4-phosphate and phosphoenolpyruvate: step 2/7. Its function is as follows. Catalyzes the conversion of 3-deoxy-D-arabino-heptulosonate 7-phosphate (DAHP) to dehydroquinate (DHQ). This chain is 3-dehydroquinate synthase, found in Bacillus subtilis (strain 168).